The sequence spans 6629 residues: Replicase polyprotein 1ab (6629 aa).

Topologically, residues 1-1750 are cytoplasmic; sequence MASSLKQGVS…VASYKTVLCK (1750 aa). One can recognise a Ubiquitin-like 1 domain in the interval 675–780; that stretch reads KTVTFGETTV…SCHLIYRDYE (106 aa). The interval 783–802 is disordered; sequence DDIEEEDAEECDTDSGEAEE. Residues 1003 to 1179 enclose the Macro domain; it reads VKPATCEKPK…YFDVTCKQKT (177 aa). The Ubiquitin-like 2 domain maps to 1175–1227; sequence CKQKTIYLTEDGVKYRSIVLKPGDSLGQFGQVYAKNKIVFTADDVEDKEILYV. The Peptidase C16 domain maps to 1236 to 1497; sequence EYYGLDAQKY…SKSVKEDVSN (262 aa). Cysteine 1274 functions as the For PL-PRO activity in the catalytic mechanism. 4 residues coordinate Zn(2+): cysteine 1353, cysteine 1355, cysteine 1387, and cysteine 1390. The C4-type; degenerate zinc-finger motif lies at 1353 to 1390; that stretch reads CNCGIKSYELRGLEACIQPVRATNLLHFKTQYSNCPTC. Residues histidine 1437 and aspartate 1448 each act as for PL-PRO activity in the active site. The chain crosses the membrane as a helical span at residues 1751–1771; sequence VVLATLLIVWFVYTSNPVMFT. The interval 1751–1864 is HD1; sequence VVLATLLIVW…KPVAGFVIIC (114 aa). In terms of domain architecture, 3Ecto spans 1769-1833; it reads MFTGIRVLDF…AYSVEQVYKD (65 aa). The Lumenal portion of the chain corresponds to 1772–1843; it reads GIRVLDFLFE…AASGFIFNWN (72 aa). 2 disulfides stabilise this stretch: cysteine 1785/cysteine 1811 and cysteine 1802/cysteine 1808. Residues 1844–1864 form a helical membrane-spanning segment; sequence WLYLVFLILFVKPVAGFVIIC. Residues 1865-2280 are Cytoplasmic-facing; sequence YCVKYLVLNS…TFKCFKSYFK (416 aa). Positions 1911 to 2001 are Y1; sequence YIQVHHILYC…KLKRHVKPTA (91 aa). Residues 1911–2263 enclose the CoV Nsp3 Y domain; the sequence is YIQVHHILYC…HTQKLLVEKK (353 aa). Histidine 1915, cysteine 1920, cysteine 1925, cysteine 1928, cysteine 1961, histidine 1964, cysteine 1968, and cysteine 1971 together coordinate Zn(2+). Residues 1915-1928 are ZF1; the sequence is HHILYCKDVTCEVC. Positions 1961 to 1971 are ZF2; that stretch reads CKRHNWYCRNC. The tract at residues 2002 to 2104 is Y2; the sequence is YAYHVVDEAC…ILDQALYEQL (103 aa). The tract at residues 2002–2263 is coV-Y; sequence YAYHVVDEAC…HTQKLLVEKK (262 aa). Residues 2105-2163 form a Y3 region; that stretch reads VVEPVSKSVIDKVCSILSSIISVDTAALNYKAGTLRDALLSITKDEEAVDMAIFCHNHD. Residues 2164–2263 form a Y4 region; the sequence is VDYTGDGFTN…HTQKLLVEKK (100 aa). A helical transmembrane segment spans residues 2281-2301; the sequence is WLLIFYILFTACCSGYYYMEV. The tract at residues 2281 to 2664 is HD2; the sequence is WLLIFYILFT…LACCYLGFII (384 aa). The Lumenal portion of the chain corresponds to 2302 to 2559; it reads SKSFVHPMYD…FFTGVNPNIY (258 aa). A helical membrane pass occupies residues 2560 to 2580; that stretch reads MQLATMFLILVVVVLIFAMVI. At 2581–2611 the chain is on the cytoplasmic side; that stretch reads KFQGVFKAYATTVFITMLVWVINAFILCVHS. The helical transmembrane segment at 2612 to 2632 threads the bilayer; the sequence is YNSVLAVILLVLYCYASLVTS. Over 2633–2643 the chain is Lumenal; it reads RNTVIIMHCWL. The chain crosses the membrane as a helical span at residues 2644–2664; it reads VFTFGLIVPTWLACCYLGFII. The Cytoplasmic segment spans residues 2665 to 3096; the sequence is YMYTPLFLWC…SSFVRKATSW (432 aa). The Nsp4C domain occupies 2684–2779; sequence LYDGNEFVGN…RYSIGVSRLQ (96 aa). In terms of domain architecture, Peptidase C30 spans 2780–3086; it reads SGFKKLVSPS…FNQIGGVRLQ (307 aa). Catalysis depends on for 3CL-PRO activity residues histidine 2820 and cysteine 2922. Residues 3097 to 3117 form a helical membrane-spanning segment; sequence FWSRCVLACFLFVLCAIVLFT. The tract at residues 3097–3317 is HD3; it reads FWSRCVLACF…WLCTCYFGLY (221 aa). The Lumenal segment spans residues 3118 to 3121; it reads AVPL. The helical transmembrane segment at 3122–3142 threads the bilayer; the sequence is KFYVYAAVILLMAVLFISFTV. At 3143–3151 the chain is on the cytoplasmic side; it reads KHVMAYMDT. The helical transmembrane segment at 3152–3172 threads the bilayer; that stretch reads FLLPTLITVIIGVCAEVPFIY. The Lumenal portion of the chain corresponds to 3173 to 3188; the sequence is NTLISQVVIFLSQWYD. The chain crosses the membrane as a helical span at residues 3189 to 3209; the sequence is PVVFDTMVPWMFLPLVLYTAF. The Cytoplasmic portion of the chain corresponds to 3210 to 3257; it reads KCVQGCYMNSFNTSLLMLYQFVKLGFVIYTSSNTLTAYTEGNWELFFE. A helical membrane pass occupies residues 3258 to 3278; sequence LVHTTVLANVSSNSLIGLFVF. Over 3279–3296 the chain is Lumenal; the sequence is KCAKWMLYYCNATYLNNY. A helical transmembrane segment spans residues 3297–3317; sequence VLMAVMVNCIGWLCTCYFGLY. Over 3318-6629 the chain is Cytoplasmic; the sequence is WWVNKVFGLT…FTSDSFVCTM (3312 aa). Residues 3380–3462 enclose the RdRp Nsp7 cofactor domain; it reads AKLSDVKCTT…DILKRSTVLQ (83 aa). Residues 3463–3672 form the RdRp Nsp8 cofactor domain; it reads SVTQEFSHIP…GHNKVDVVLQ (210 aa). The 111-residue stretch at 3673–3783 folds into the Nsp9 ssRNA-binding domain; sequence NNELMPHGVK…GAISNVVVLQ (111 aa). Residues 3785-3926 enclose the ExoN/MTase coactivator domain; sequence KGHETEEVDA…CDSLRQPKSS (142 aa). Zn(2+) contacts are provided by cysteine 3858, cysteine 3861, histidine 3867, cysteine 3878, cysteine 3904, cysteine 3907, cysteine 3915, and cysteine 3917. 2 zinc fingers span residues 3858 to 3878 and 3904 to 3917; these read CLYC…DGRC and CTVC…GCQC. Residues 3940-4198 enclose the NiRAN domain; it reads YLNRVRGSSE…APERYFEYDV (259 aa). The region spanning 4203–4301 is the Nsp12 Interface domain; that stretch reads KSYDLLKYDY…MNQDNTMSFS (99 aa). Histidine 4232, cysteine 4238, cysteine 4243, cysteine 4247, and cysteine 4424 together coordinate Zn(2+). One can recognise a Nsp12 RNA-dependent RNA polymerase domain in the interval 4302 to 4868; it reads KMGLSQLMQF…NMYRAPTTLQ (567 aa). The segment at 4304 to 4517 is rdRp Fingers N-ter; that stretch reads GLSQLMQFVG…HQKILKSIVN (214 aa). Positions 4518 to 4556 are rdRp Palm N-ter; sequence TRNASVVIGTTKFYGGWDNMLRNLIQGVEDPILMGWDYP. Residues 4548–4710 enclose the RdRp catalytic domain; it reads PILMGWDYPK…CYNNTLAKQG (163 aa). A rdRp Fingers C-ter region spans residues 4557-4615; that stretch reads KCDRAMPNLLRIAASLVLARKHTNCCSWSERIYRLYNECAQVLSETVLATGGIYVKPGG. Zn(2+) contacts are provided by histidine 4578, cysteine 4581, and cysteine 4582. The segment at 4616-4751 is rdRp Palm C-ter; that stretch reads TSSGDATTAY…EKGPHEFCSQ (136 aa). Catalysis depends on residues serine 4695, aspartate 4696, and aspartate 4697. The segment at 4752 to 4868 is rdRp Thumb; it reads HTMLVEVDGE…NMYRAPTTLQ (117 aa). Positions 4869-4981 constitute a CV ZBD domain; sequence SCGVCVVCNS…DDFNQLATTN (113 aa). Cysteine 4873, cysteine 4876, cysteine 4884, cysteine 4887, cysteine 4894, cysteine 4897, histidine 4901, histidine 4907, cysteine 4918, cysteine 4923, cysteine 4940, and histidine 4943 together coordinate Zn(2+). The (+)RNA virus helicase ATP-binding domain maps to 5125-5305; that stretch reads MVPECFVNNI…MVCVKPDIFL (181 aa). 5150–5157 is a binding site for ATP; the sequence is GPPGSGKS. A (+)RNA virus helicase C-terminal domain is found at 5306–5477; that stretch reads AKCYRCPKEI…QGTGLFKICN (172 aa). Residues 5539–5753 form the ExoN domain; it reads MFITRDEAIR…RCLAINNAFC (215 aa). Catalysis depends on residues aspartate 5557, glutamate 5559, and glutamate 5658. Zn(2+) contacts are provided by cysteine 5674, cysteine 5676, cysteine 5692, histidine 5695, histidine 5723, cysteine 5727, and histidine 5730. Residues histidine 5734 and aspartate 5739 contribute to the active site. Cysteine 5745 is a Zn(2+) binding site. Positions 5762–5989 constitute an N7-MTase domain; it reads YPHIANEDEV…NLWKSFSALQ (228 aa). An S-adenosyl-L-methionine-binding site is contributed by 5797–5803; the sequence is DIGNPKG. The interval 5877–5891 is gpppA-binding; sequence CNGGSLYVNKHAFYT. Zn(2+) contacts are provided by cysteine 5915, cysteine 5935, cysteine 5946, and histidine 5949. The 61-residue stretch at 5990-6050 folds into the Nsp15 N-terminal oligomerization domain; the sequence is SIDNIAYNMY…SVAFELYAKR (61 aa). The 116-residue stretch at 6051–6166 folds into the AV-Nsp11N/CoV-Nsp15M domain; it reads NIRTLPNNRI…VYKRVNGAFV (116 aa). A NendoU domain is found at 6183 to 6324; the sequence is EPRSDIERDF…EDGSIKTCYP (142 aa). Residues histidine 6212, histidine 6227, lysine 6267, lysine 6371, aspartate 6455, lysine 6499, and glutamate 6532 contribute to the active site. Residues 6327–6626 enclose the Nidovirus-type SAM-dependent 2'-O-MTase domain; it reads QSAWTCGYNM…NTSFTSDSFV (300 aa).

It belongs to the coronaviruses polyprotein 1ab family. In terms of assembly, interacts with host PHB and PHB2. As to quaternary structure, interacts with papain-like protease and non-structural protein 6. Monomer. Homodimer. Only the homodimer shows catalytic activity. In terms of assembly, eight copies of nsp7 and eight copies of nsp8 assemble to form a heterohexadecamer dsRNA-encircling ring structure. As to quaternary structure, eight copies of nsp7 and eight copies of nsp8 assemble to form a heterohexadecamer dsRNA-encircling ring structure. Interacts with ORF6 protein. Homodimer. In terms of assembly, homododecamer. Interacts with proofreading exoribonuclease nsp14 and 2'-O-methyltransferase nsp16; these interactions enhance nsp14 and nsp16 enzymatic activities. As to quaternary structure, interacts with host DDX1 (via C-terminus). Interacts with non-structural protein 10. Homohexamer. In terms of assembly, interacts with non-structural protein 10. Requires Mn(2+) as cofactor. The cofactor is Zn(2+). Post-translationally, specific enzymatic cleavages in vivo by its own proteases yield mature proteins. 3C-like proteinase nsp5 liberates nsps 6-16 from the polyprotein. Papain-like and 3C-like proteinases are autocatalytically processed. In terms of processing, N-glycosylated.

It localises to the host endoplasmic reticulum membrane. Its subcellular location is the host cytoplasm. The protein localises to the host perinuclear region. It is found in the host endoplasmic reticulum. The protein resides in the host endoplasmic reticulum-Golgi intermediate compartment. It carries out the reaction Thiol-dependent hydrolysis of ester, thioester, amide, peptide and isopeptide bonds formed by the C-terminal Gly of ubiquitin (a 76-residue protein attached to proteins as an intracellular targeting signal).. It catalyses the reaction RNA(n) + a ribonucleoside 5'-triphosphate = RNA(n+1) + diphosphate. The catalysed reaction is ATP + H2O = ADP + phosphate + H(+). The enzyme catalyses uridylyl-uridylyl-ribonucleotide-RNA = a 3'-end uridylyl-2',3'-cyclophospho-uridine-RNA + a 5'-end dephospho-ribonucleoside-RNA. It carries out the reaction a 5'-end diphospho-ribonucleoside in mRNA + GTP + H(+) = a 5'-end (5'-triphosphoguanosine)-ribonucleoside in mRNA + diphosphate. It catalyses the reaction a 5'-end (N(7)-methyl 5'-triphosphoguanosine)-ribonucleoside in mRNA + S-adenosyl-L-methionine = a 5'-end (N(7)-methyl 5'-triphosphoguanosine)-(2'-O-methyl-ribonucleoside) in mRNA + S-adenosyl-L-homocysteine + H(+). In terms of biological role, multifunctional protein involved in the transcription and replication of viral RNAs. Contains the proteinases responsible for the cleavages of the polyprotein. Its function is as follows. May play a role in the modulation of host cell survival signaling pathway by interacting with host PHB and PHB2. Indeed, these two proteins play a role in maintaining the functional integrity of the mitochondria and protecting cells from various stresses. Functionally, responsible for the cleavages located at the N-terminus of the replicase polyprotein. In addition, PL-PRO possesses a deubiquitinating/deISGylating activity and processes both 'Lys-48'- and 'Lys-63'-linked polyubiquitin chains from cellular substrates. Plays a role in host membrane rearrangement that leads to creation of cytoplasmic double-membrane vesicles (DMV) necessary for viral replication. Alone is able to induce paired membranes. Coexpression of nsp3 and nsp4 does not result in the formation of DMVs. In terms of biological role, responsible for the majority of cleavages as it cleaves the C-terminus of replicase polyprotein at 11 sites. Recognizes substrates containing the core sequence [ILMVF]-Q-|-[SGACN]. Inhibited by the substrate-analog Cbz-Val-Asn-Ser-Thr-Leu-Gln-CMK. Its function is as follows. Forms a hexadecamer with nsp8 (8 subunits of each) that may participate in viral replication by acting as a primase. Alternatively, may synthesize substantially longer products than oligonucleotide primers. Functionally, forms a hexadecamer with nsp7 (8 subunits of each) that may participate in viral replication by acting as a primase. Alternatively, may synthesize substantially longer products than oligonucleotide primers. Forms a primer, NSP9-pU, which is utilized by the polymerase for the initiation of RNA chains. Interacts with ribosome signal recognition particle RNA (SRP). Together with NSP8, suppress protein integration into the cell membrane, thereby disrupting host immune defenses. In terms of biological role, plays a pivotal role in viral transcription by stimulating both nsp14 3'-5' exoribonuclease and nsp16 2'-O-methyltransferase activities. Therefore plays an essential role in viral mRNAs cap methylation. Its function is as follows. RNA-directed RNA polymerase that catalyzes the transcription of viral genomic and subgenomic RNAs. Acts in complex with nsp7 and nsp8 to transcribe both the minus and positive strands of genomic RNA. The kinase-like NiRAN domain of NSP12 attaches one or more nucleotides to the amino terminus of NSP9, forming a covalent RNA-protein intermediate that serves as transcription/replication primer. Subgenomic RNAs (sgRNAs) are formed by discontinuous transcription: The polymerase has the ability to pause at transcription-regulating sequences (TRS) and jump to the leader TRS, resulting in a major deletion. This creates a series of subgenomic RNAs that are replicated, transcribed and translated. In addition, Nsp12 is a subunit of the viral RNA capping enzyme that catalyzes the RNA guanylyltransferase reaction for genomic and sub-genomic RNAs. Subsequently, the NiRAN domain transfers RNA to GDP, and forms the core cap structure GpppA-RNA. Functionally, multi-functional protein with a zinc-binding domain in N-terminus displaying RNA and DNA duplex-unwinding activities with 5' to 3' polarity. Activity of helicase is dependent on magnesium. Enzyme possessing two different activities: an exoribonuclease activity acting on both ssRNA and dsRNA in a 3' to 5' direction and a N7-guanine methyltransferase activity. Acts as a proofreading exoribonuclease for RNA replication, thereby lowering The sensitivity of the virus to RNA mutagens. In terms of biological role, plays a role in viral transcription/replication and prevents the simultaneous activation of host cell dsRNA sensors, such as MDA5/IFIH1, OAS, and PKR. Acts by degrading the 5'-polyuridines generated during replication of the poly(A) region of viral genomic and subgenomic RNAs. Catalyzes a two-step reaction in which a 2'3'-cyclic phosphate (2'3'-cP) is first generated by 2'-O transesterification, which is then hydrolyzed to a 3'-phosphate (3'-P). If not degraded, poly(U) RNA would hybridize with poly(A) RNA tails and activate host dsRNA sensors. Its function is as follows. Methyltransferase that mediates mRNA cap 2'-O-ribose methylation to the 5'-cap structure of viral mRNAs. N7-methyl guanosine cap is a prerequisite for binding of nsp16. Therefore plays an essential role in viral mRNAs cap methylation which is essential to evade immune system. The chain is Replicase polyprotein 1ab (rep) from Gallus gallus (Chicken).